Here is a 347-residue protein sequence, read N- to C-terminus: NADH-ubiquinone oxidoreductase chain 2 (347 aa).

A run of 11 helical transmembrane segments spans residues 3 to 23 (PPIF…VMTS), 25 to 45 (HWML…PILM), 59 to 79 (YFLT…INLL), 96 to 116 (ILMT…FWVP), 122 to 142 (IPLS…LSVL), 149 to 169 (INPN…GWGG), 178 to 198 (ILAY…LYNP), 201 to 221 (MILN…LFML), 237 to 257 (MPLI…LPPL), 274 to 294 (EMII…YFYM), and 325 to 345 (FLPP…MISI).

This sequence belongs to the complex I subunit 2 family. As to quaternary structure, core subunit of respiratory chain NADH dehydrogenase (Complex I) which is composed of 45 different subunits. Interacts with TMEM242.

The protein localises to the mitochondrion inner membrane. It catalyses the reaction a ubiquinone + NADH + 5 H(+)(in) = a ubiquinol + NAD(+) + 4 H(+)(out). Functionally, core subunit of the mitochondrial membrane respiratory chain NADH dehydrogenase (Complex I) which catalyzes electron transfer from NADH through the respiratory chain, using ubiquinone as an electron acceptor. Essential for the catalytic activity and assembly of complex I. The sequence is that of NADH-ubiquinone oxidoreductase chain 2 from Genetta servalina (Servaline genet).